The primary structure comprises 952 residues: MLKNAQKDFIQRHIGPSVDEQNVMLKELGYQNLDDLIKDTVPEKILLKDDLDIGDPNSEYKALRKLKDISKKNKIYSSFIGMGYYGTYTPYVILRNILENPGWYTSYTPYQPEVAQGRLEMLLNFQQMIIDFTGMDIANASLLDEGTAAAEAMGLSYRISKSESKKVFVSKNCHPQTIDVIKTRAEPLGLEIIVGDEDKDIKEDIICGIIQYPGTLGDIKDPSEAISKIHKFNGKAVLACDLLALAKLKTPAELGADIAVGSSQRFGIPMGYGGPHAAFFATKDEYKRSMPGRIVGVSVDRHGKKAYRLALQTREQHIRRDKATSNICTAQALLAIVSAAYAVYHGPQGIKKIAESVSQLTKNFADKLKQSGYELYSNEFFDTVTIKTLDKTEKIYKNALDQGVNIRKVNSEMLAVSFDERKNLYRANQLLKIFNCSETIKETMNESLSNIPKNLLRTSTYLDHPVFNSYHSETEMLRYLKKLEDSDIALNKSMIALGSCTMKLNAVAEMIPVTWKEFSQPHPFSPVEQMDGYRELFTDLKNWLRSITGFSGVSLQPNAGAQGEFAGLMVIRKFHEKNGETNRNVCLIPSSAHGTNPASAQMVGMKVVVVKCDQYGNVDYEDLKNKAEEHSENLAALMVTYPSTHGVFEEKITDICELIHNHGGQVYMDGANLNALVGIAKPGNFGPDVCHINLHKTFCIPHGGGGPGMGPIACKKHLEIFLPKHSVIKDCGPVTGMGAVSAAPWGSSSILSISWMYIKMMGSEGLRKASQVAILNANYIAHKLKDSFPILYKGKSGNVAHECIIDIRTIKSETGITEEDIAKRLIDFGYHAPTMSWPVAGTMMIEPTESESLSEIDKFCSTLIKIKQEIDKIQSGEYDKTDNPLKNAPHTHVELTSNKWDHKYEREEAAYPSEFLRTNKYWPPVGRVDNVYGDKNLFCTCPSMEEYEDTAA.

At K696 the chain carries N6-(pyridoxal phosphate)lysine.

Belongs to the GcvP family. As to quaternary structure, the glycine cleavage system is composed of four proteins: P, T, L and H. Requires pyridoxal 5'-phosphate as cofactor.

The enzyme catalyses N(6)-[(R)-lipoyl]-L-lysyl-[glycine-cleavage complex H protein] + glycine + H(+) = N(6)-[(R)-S(8)-aminomethyldihydrolipoyl]-L-lysyl-[glycine-cleavage complex H protein] + CO2. In terms of biological role, the glycine cleavage system catalyzes the degradation of glycine. The P protein binds the alpha-amino group of glycine through its pyridoxal phosphate cofactor; CO(2) is released and the remaining methylamine moiety is then transferred to the lipoamide cofactor of the H protein. This Pelagibacter ubique (strain HTCC1062) protein is Glycine dehydrogenase (decarboxylating).